The chain runs to 80 residues: Toxin-like peptide AaF1CA1 (80 aa).

The N-terminal stretch at 1–22 (MMKLVLFSVIVILFSLIGSIHG) is a signal peptide. The region spanning 25–80 (VPGNYPLRPFRYRYGCAVPGDSDYCVRVCRKHGVRYGYCWFFTCWCEYLEDKNIKI) is the LCN-type CS-alpha/beta domain. 3 disulfides stabilise this stretch: cysteine 40–cysteine 63, cysteine 49–cysteine 68, and cysteine 53–cysteine 70.

The protein belongs to the long (3 C-C) scorpion toxin superfamily. Expressed by the venom gland.

It localises to the secreted. Probable ion channel inhibitor. The polypeptide is Toxin-like peptide AaF1CA1 (Androctonus australis (Sahara scorpion)).